The sequence spans 471 residues: UDP-N-acetylmuramoylalanine--D-glutamate ligase (471 aa).

135–141 is a binding site for ATP; that stretch reads GTNGKTT.

This sequence belongs to the MurCDEF family.

It localises to the cytoplasm. It catalyses the reaction UDP-N-acetyl-alpha-D-muramoyl-L-alanine + D-glutamate + ATP = UDP-N-acetyl-alpha-D-muramoyl-L-alanyl-D-glutamate + ADP + phosphate + H(+). The protein operates within cell wall biogenesis; peptidoglycan biosynthesis. Its function is as follows. Cell wall formation. Catalyzes the addition of glutamate to the nucleotide precursor UDP-N-acetylmuramoyl-L-alanine (UMA). The sequence is that of UDP-N-acetylmuramoylalanine--D-glutamate ligase from Frankia casuarinae (strain DSM 45818 / CECT 9043 / HFP020203 / CcI3).